A 1185-amino-acid polypeptide reads, in one-letter code: Zinc finger SWIM domain-containing protein 5 (1185 aa).

The segment covering 1–10 (MADGGEREEL) has biased composition (basic and acidic residues). Disordered stretches follow at residues 1 to 45 (MADG…GGAG) and 123 to 153 (AGAA…GSAP). An SWIM-type zinc finger spans residues 219 to 256 (YKVAISFDRCKITSVTCGCGNKDIFYCAHVVALSLYRI).

The sequence is that of Zinc finger SWIM domain-containing protein 5 (ZSWIM5) from Homo sapiens (Human).